The sequence spans 200 residues: Cytochrome c biogenesis ATP-binding export protein CcmA (200 aa).

Positions 1–200 constitute an ABC transporter domain; sequence MRLSGRGLRC…TREMRIGAAA (200 aa). Position 35 to 42 (35 to 42) interacts with ATP; it reads GRNGAGKT.

It belongs to the ABC transporter superfamily. CcmA exporter (TC 3.A.1.107) family. As to quaternary structure, the complex is composed of two ATP-binding proteins (CcmA) and two transmembrane proteins (CcmB).

It localises to the cell inner membrane. The catalysed reaction is heme b(in) + ATP + H2O = heme b(out) + ADP + phosphate + H(+). Functionally, part of the ABC transporter complex CcmAB involved in the biogenesis of c-type cytochromes; once thought to export heme, this seems not to be the case, but its exact role is uncertain. Responsible for energy coupling to the transport system. The chain is Cytochrome c biogenesis ATP-binding export protein CcmA from Rhodopseudomonas palustris (strain HaA2).